The following is a 341-amino-acid chain: MHTDLDTDMDADTETVALCSSSSRQASPSGTPTPEADTTLLKQKPEKLLAELDRGGPPPAPGVPRRRGSMPVPYKHQLRRAQAVDELDWPPQASSSGSSDSLGSGEAALAQKDGVFKVMLLGESGVGKSTLAGTFGGLQGDNAHEMENSEDTYERRIMVDKEEVTLIVYDIWEQGDAGGWLQDHCLQTGDAFLIVFSVTDRRSFSKVPETLLRLRAGRPHHDLPVILVGNKSDLARSREVSLEEGRHLAGTLSCKHIETSAALHHNTRELFEGAVRQIRLRRGRGHAGGQRPEPSSPDGPAPPTRRESLTKKAKRFLANLVPRNAKFFKQRSRSCHDLSVL.

Positions 1–13 (MHTDLDTDMDADT) are enriched in acidic residues. Disordered regions lie at residues 1-72 (MHTD…SMPV) and 84-106 (VDEL…GSGE). Polar residues predominate over residues 18 to 32 (LCSSSSRQASPSGTP). Ser-27 is modified (phosphoserine). Residues 43 to 54 (QKPEKLLAELDR) are compositionally biased toward basic and acidic residues. Residues 94-105 (SSSGSSDSLGSG) are compositionally biased toward low complexity. GTP-binding positions include 122-129 (GESGVGKS), 230-233 (NKSD), and 261-262 (AA). The segment at 282-309 (RGRGHAGGQRPEPSSPDGPAPPTRRESL) is disordered. Positions 294–303 (PSSPDGPAPP) are enriched in pro residues. Ser-296 bears the Phosphoserine mark.

The protein belongs to the small GTPase superfamily. RGK family. In terms of tissue distribution, expressed in brain and kidney.

It localises to the cell membrane. In terms of biological role, binds GTP saturably and exhibits a low intrinsic rate of GTP hydrolysis. The polypeptide is GTP-binding protein REM 2 (Rem2) (Rattus norvegicus (Rat)).